The sequence spans 158 residues: Cyclic pyranopterin monophosphate synthase (158 aa).

Residues Leu-75 to His-77 and Met-113 to Glu-114 contribute to the substrate site. Asp-128 is a catalytic residue.

This sequence belongs to the MoaC family. As to quaternary structure, homohexamer; trimer of dimers.

The enzyme catalyses (8S)-3',8-cyclo-7,8-dihydroguanosine 5'-triphosphate = cyclic pyranopterin phosphate + diphosphate. It functions in the pathway cofactor biosynthesis; molybdopterin biosynthesis. Functionally, catalyzes the conversion of (8S)-3',8-cyclo-7,8-dihydroguanosine 5'-triphosphate to cyclic pyranopterin monophosphate (cPMP). The polypeptide is Cyclic pyranopterin monophosphate synthase (Histophilus somni (strain 129Pt) (Haemophilus somnus)).